The primary structure comprises 446 residues: Lysine histidine transporter 1 (446 aa).

Residues 1–37 (MVAQAPHDDHQDDEKLAAARQKEIEDWLPITSSRNAK) are Cytoplasmic-facing. Residues 38–58 (WWYSAFHNVTAMVGAGVLGLP) traverse the membrane as a helical segment. The Extracellular portion of the chain corresponds to 59-63 (YAMSQ). Residues 64 to 84 (LGWGPGIAVLVLSWVITLYTL) traverse the membrane as a helical segment. Residues 85-115 (WQMVEMHEMVPGKRFDRYHELGQHAFGEKLG) are Cytoplasmic-facing. A helical transmembrane segment spans residues 116–136 (LYIVVPQQLIVEIGVCIVYMV). Over 137–157 (TGGKSLKKFHELVCDDCKPIK) the chain is Extracellular. The helical transmembrane segment at 158 to 178 (LTYFIMIFASVHFVLSHLPNF) threads the bilayer. Residues 179–180 (NS) are Cytoplasmic-facing. A helical transmembrane segment spans residues 181–201 (ISGVSLAAAVMSLSYSTIAWA). Over 202–227 (SSASKGVQEDVQYGYKAKTTAGTVFN) the chain is Extracellular. A helical transmembrane segment spans residues 228–248 (FFSGLGDVAFAYAGHNVVLEI). Topologically, residues 249 to 268 (QATIPSTPEKPSKGPMWRGV) are cytoplasmic. The helical transmembrane segment at 269–289 (IVAYIVVALCYFPVALVGYYI) threads the bilayer. Residues 290–305 (FGNGVEDNILMSLKKP) lie on the Extracellular side of the membrane. The chain crosses the membrane as a helical span at residues 306 to 326 (AWLIATANIFVVIHVIGSYQI). The Cytoplasmic segment spans residues 327-352 (YAMPVFDMMETLLVKKLNFRPTTTLR). The chain crosses the membrane as a helical span at residues 353-375 (FFVRNFYVAATMFVGMTFPFFGG). The Extracellular portion of the chain corresponds to 376 to 378 (LLA). A helical transmembrane segment spans residues 379 to 401 (FFGGFAFAPTTYFLPCVIWLAIY). Over 402–409 (KPKKYSLS) the chain is Cytoplasmic. The helical transmembrane segment at 410 to 430 (WWANWVCIVFGLFLMVLSPIG) threads the bilayer. At 431 to 446 (GLRTIVIQAKGYKFYS) the chain is on the extracellular side.

Belongs to the amino acid/polyamine transporter 2 family. Amino acid/auxin permease (AAAP) (TC 2.A.18.2) subfamily. As to expression, expressed in roots, stems, flowers, leaves, siliques and pollen. Found in the tips of roots and in the rhizodermis of emerging roots and in lateral roots. Higher expression in older leaves as compared to joung leaves. Detected first at the hydathodes, then in the epidermis and finally in matures leaves in all mesophyll cells. Not detected in vascular bundles or in seeds.

It is found in the cell membrane. Its activity is regulated as follows. Inhibited by carbonlycyanide m-chlorophenylhydrazone (CCCP) and DEPC. Its function is as follows. Amino acid-proton symporter. Transporter with a broad specificity for histidine, lysine, glutamic acid, alanine, serine, proline and glycine. Involved in both apoplastic transport of amino acids in leaves and their uptake by roots. The protein is Lysine histidine transporter 1 (LHT1) of Arabidopsis thaliana (Mouse-ear cress).